Here is an 843-residue protein sequence, read N- to C-terminus: DNA-directed RNA polymerase subunit beta' (843 aa).

Cys70, Cys72, Cys85, and Cys88 together coordinate Zn(2+). Residues Asp686, Asp688, and Asp690 each coordinate Mg(2+).

Belongs to the RNA polymerase beta' chain family. RpoC1 subfamily. In terms of assembly, in plastids the minimal PEP RNA polymerase catalytic core is composed of four subunits: alpha, beta, beta', and beta''. When a (nuclear-encoded) sigma factor is associated with the core the holoenzyme is formed, which can initiate transcription. Mg(2+) is required as a cofactor. The cofactor is Zn(2+).

Its subcellular location is the plastid. It is found in the chloroplast. It carries out the reaction RNA(n) + a ribonucleoside 5'-triphosphate = RNA(n+1) + diphosphate. DNA-dependent RNA polymerase catalyzes the transcription of DNA into RNA using the four ribonucleoside triphosphates as substrates. This is DNA-directed RNA polymerase subunit beta' from Trieres chinensis (Marine centric diatom).